Reading from the N-terminus, the 551-residue chain is MHHLHPMIVCIFVMYTGIVGSDAIAGDQLLNIGVIQSKIRSLMYYTDGGASFIVVKLLPNLPPSNGTCNITSLDAYNVTLFKLLTPLIENLSKISTVTDTKTRQKRFAGVVVGLAALGVATAAQITAAVAIVKANANAAAINNLASSIQSTNKAVSDVIDASRTIATAVQAIQDRINGAIVNGITSASCRAHDALIGSILNLYLTELTTIFHNQITNPALTPLSIQALRILLGSTLPIVIESKLNTNFNTAELLSSGLLTGQIISISPMYMQMLIQINVPTFIMQPGAKVIDLIAISANHKLQEVVVQVPNRILEYANELQNYPANDCVVTPNSVFCRYNEGSPIPESQYQCLRGNLNSCTFTPIIGNFLKRFAFANGVLYANCKSLLCRCADPPHVVSQDDTQGISIIDIKRCSEMMLDTFSFRITSTFNATYVTDFSMINANIVHLSPLDLSNQINSINKSLKSAEDWIADSNFFANQARTAKTLYSLSAIALILSVITLVVVGLLIAYIIKLVSQIHQFRSLAATTMFHRENPAFFSKNNHGNIYGIS.

A signal peptide spans 1–23 (MHHLHPMIVCIFVMYTGIVGSDA). Residues 24 to 492 (IAGDQLLNIG…TAKTLYSLSA (469 aa)) lie on the Extracellular side of the membrane. 4 N-linked (GlcNAc...) asparagine; by host glycosylation sites follow: N65, N69, N77, and N90. Cystine bridges form between C68/C189, C328/C337, C352/C360, C384/C389, and C391/C414. A fusion peptide region spans residues 107 to 131 (FAGVVVGLAALGVATAAQITAAVAI). The stretch at 132–160 (VKANANAAAINNLASSIQSTNKAVSDVID) forms a coiled coil. N-linked (GlcNAc...) asparagine; by host glycans are attached at residues N431 and N461. Residues 456-481 (QINSINKSLKSAEDWIADSNFFANQA) are a coiled coil. A helical membrane pass occupies residues 493-513 (IALILSVITLVVVGLLIAYII). Residues 514 to 551 (KLVSQIHQFRSLAATTMFHRENPAFFSKNNHGNIYGIS) lie on the Cytoplasmic side of the membrane.

It belongs to the paramyxoviruses fusion glycoprotein family. As to quaternary structure, homotrimer of disulfide-linked F1-F2. The inactive precursor F0 is glycosylated and proteolytically cleaved into F1 and F2 to be functionally active. The cleavage is mediated by cellular proteases during the transport and maturation of the polypeptide.

It is found in the virion membrane. It localises to the host cell membrane. Its function is as follows. Class I viral fusion protein. Under the current model, the protein has at least 3 conformational states: pre-fusion native state, pre-hairpin intermediate state, and post-fusion hairpin state. During viral and plasma cell membrane fusion, the heptad repeat (HR) regions assume a trimer-of-hairpins structure, positioning the fusion peptide in close proximity to the C-terminal region of the ectodomain. The formation of this structure appears to drive apposition and subsequent fusion of viral and plasma cell membranes. Directs fusion of viral and cellular membranes leading to delivery of the nucleocapsid into the cytoplasm. This fusion is pH independent and occurs directly at the outer cell membrane. The trimer of F1-F2 (F protein) probably interacts with HN at the virion surface. Upon HN binding to its cellular receptor, the hydrophobic fusion peptide is unmasked and interacts with the cellular membrane, inducing the fusion between cell and virion membranes. Later in infection, F proteins expressed at the plasma membrane of infected cells could mediate fusion with adjacent cells to form syncytia, a cytopathic effect that could lead to tissue necrosis. This chain is Fusion glycoprotein F0 (F), found in Homo sapiens (Human).